The primary structure comprises 1964 residues: Probable helicase with zinc finger domain (1964 aa).

The C3H1-type zinc-finger motif lies at 178 to 206 (SEEYTLCKRFLEQGICRYGAQCTSAHSQE). Phosphoserine is present on serine 248. Position 668-675 (668-675 (GPYGTGKT)) interacts with ATP. The short motif at 794–797 (DEAA) is the DEAA box element. Over residues 1116–1127 (HSGNSSRQQQSP) the composition is skewed to polar residues. The segment at 1116–1135 (HSGNSSRQQQSPPKVKSLYH) is disordered. Threonine 1163 carries the post-translational modification Phosphothreonine. The residue at position 1245 (arginine 1245) is an Omega-N-methylarginine. Disordered stretches follow at residues 1248–1350 (PIPY…LPAP), 1360–1379 (HFHP…QPHT), 1388–1449 (LPEQ…QAGP), 1463–1491 (QSPA…RAIT), 1631–1655 (QVQP…QFAN), and 1743–1964 (QHAA…SYFK). Composition is skewed to basic and acidic residues over residues 1268 to 1281 (HAEK…RNGK) and 1292 to 1308 (NKIR…KQVD). Residues 1365–1374 (PQLPRPPFPA) show a composition bias toward pro residues. Low complexity predominate over residues 1388–1431 (LPEQPNQMAPQPNQVAPQPNQMTPQPNQVAPQPNQVVQQQSQAP). A compositionally biased stretch (pro residues) spans 1635 to 1644 (RSPPAVPSPP). Phosphoserine occurs at positions 1636, 1760, 1763, and 1788. Over residues 1755–1765 (SSRTVSASSLP) the composition is skewed to polar residues. Composition is skewed to polar residues over residues 1799-1813 (PQDS…QGHS) and 1826-1849 (WANT…TSQP). Positions 1860–1870 (KPPEDQLKPES) are enriched in basic and acidic residues. Composition is skewed to polar residues over residues 1872-1881 (EVSSSFNYSM) and 1897-1910 (IAES…QSPA). The span at 1941 to 1956 (PLSLLQELSLGSSPGS) shows a compositional bias: low complexity.

It belongs to the DNA2/NAM7 helicase family. Interacts with POLR2A. Interacts with SMYD3; the interaction may bridge SMYD3 and RNA polymerase II. Interacts with SMYD2.

It is found in the nucleus. In terms of biological role, may act as a helicase that plays a role in RNA metabolism in multiple tissues and organs within the developing embryo. The chain is Probable helicase with zinc finger domain (Helz) from Mus musculus (Mouse).